We begin with the raw amino-acid sequence, 642 residues long: Threonine--tRNA ligase (642 aa).

The region spanning 1 to 61 is the TGS domain; sequence MPVITLPDGS…DTDAQLAIIT (61 aa). Positions 243–534 are catalytic; that stretch reads DHRKIGKQLD…LTEEFAGFFP (292 aa). Positions 334, 385, and 511 each coordinate Zn(2+).

It belongs to the class-II aminoacyl-tRNA synthetase family. Homodimer. Zn(2+) is required as a cofactor.

The protein localises to the cytoplasm. The enzyme catalyses tRNA(Thr) + L-threonine + ATP = L-threonyl-tRNA(Thr) + AMP + diphosphate + H(+). Its function is as follows. Catalyzes the attachment of threonine to tRNA(Thr) in a two-step reaction: L-threonine is first activated by ATP to form Thr-AMP and then transferred to the acceptor end of tRNA(Thr). Also edits incorrectly charged L-seryl-tRNA(Thr). The sequence is that of Threonine--tRNA ligase from Pectobacterium carotovorum subsp. carotovorum (strain PC1).